The sequence spans 2582 residues: Chromodomain-helicase-DNA-binding protein 8 (2582 aa).

4 disordered regions span residues 22–111 (DDSF…PVLQ), 136–155 (MGVS…PSQS), 253–283 (VKGS…TQGE), and 349–377 (QKIQ…PLTL). 3 stretches are compositionally biased toward polar residues: residues 42–51 (SLDSLDQMNQ), 94–111 (DYTT…PVLQ), and 141–155 (TGVS…PSQS). The span at 255 to 267 (GSAPAGNPGAAGP) shows a compositional bias: low complexity. Positions 355–372 (PQPPSSQPQPQPQPPPSA) are enriched in pro residues. Serine 434 bears the Phosphoserine mark. 2 disordered regions span residues 475-585 (RARG…VKRK) and 598-617 (DEEE…PILP). A compositionally biased stretch (basic and acidic residues) spans 495-518 (RPEEEGEKKRRKKSSGERLKEEKP). 2 positions are modified to phosphoserine: serine 555 and serine 564. Positions 574–585 (QKRRSNRQVKRK) are enriched in basic residues. A Glycyl lysine isopeptide (Lys-Gly) (interchain with G-Cter in SUMO) cross-link involves residue lysine 611. Chromo domains are found at residues 644-711 (AIVD…AQMR) and 726-792 (VEVD…RVNR). Residues 825 to 999 (LFNWYNRQNC…FSLLHFLEPS (175 aa)) enclose the Helicase ATP-binding domain. 838-845 (DEMGLGKT) contacts ATP. The DEAH box motif lies at 950–953 (DEAH). The 152-residue stretch at 1139–1290 (LIDKLLPKLK…KAVLQSMSGR (152 aa)) folds into the Helicase C-terminal domain. Serine 1422 and serine 1426 each carry phosphoserine. The segment at 1694–1715 (EDPEYKPLQGPPKDPDDEGDPL) is disordered. The interval 1791–2304 (IARREKQQRW…LVELEVECME (514 aa)) is interaction with FAM124B. Serine 1978 and serine 1980 each carry phosphoserine. Residues 1990–2019 (QCTSRTASPSPLRPDAPVEKSPEESTVQVP) are disordered. Threonine 1995 bears the Phosphothreonine mark. Phosphoserine occurs at positions 1997, 1999, and 2010. Lysine 2027 participates in a covalent cross-link: Glycyl lysine isopeptide (Lys-Gly) (interchain with G-Cter in SUMO2). Residues serine 2040, serine 2070, and serine 2072 each carry the phosphoserine modification. Positions 2045 to 2120 (VRVGSSDTAP…RSRPKLYDEE (76 aa)) are disordered. Over residues 2065–2074 (EDEDDSDSEL) the composition is skewed to acidic residues. A compositionally biased stretch (low complexity) spans 2077 to 2096 (SKLSPSSSSSSSSSSSSSST). Positions 2104-2118 (EEKLTADRSRPKLYD) are enriched in basic and acidic residues. 3 positions are modified to phosphoserine: serine 2184, serine 2202, and serine 2204. Positions 2187–2233 (VTAGGILGPGNHLLDSPSLTPGEDGDSPVPTPRSGSAASMAEEEASA) are disordered. Phosphothreonine is present on threonine 2206. The residue at position 2213 (serine 2213) is a Phosphoserine. The residue at position 2217 (threonine 2217) is a Phosphothreonine. Residues 2222–2233 (SAASMAEEEASA) are compositionally biased toward low complexity. Phosphoserine is present on serine 2225. Lysine 2258 participates in a covalent cross-link: Glycyl lysine isopeptide (Lys-Gly) (interchain with G-Cter in SUMO2). The disordered stretch occupies residues 2486–2582 (HVDSSTMLHH…NSDSSEDADD (97 aa)). Over residues 2493-2511 (LHHHHHHPHPHHHHHHHPG) the composition is skewed to basic residues. Low complexity predominate over residues 2514–2529 (TTGYPSSPATTTSGTA). Position 2520 is a phosphoserine (serine 2520). Positions 2537–2551 (PEDDDEEEDEEDDDL) are enriched in acidic residues.

Belongs to the SNF2/RAD54 helicase family. CHD8 subfamily. In terms of assembly, interacts with CTNNB1 and PIAS3. Component of some MLL1/MLL complex, at least composed of the core components KMT2A/MLL1, ASH2L, HCFC1/HCF1, WDR5 and RBBP5, as well as the facultative components BACC1, CHD8, E2F6, HSP70, INO80C, KANSL1, LAS1L, MAX, MCRS1, MGA, KAT8/MOF, PELP1, PHF20, PRP31, RING2, RUVB1/TIP49A, RUVB2/TIP49B, SENP3, TAF1, TAF4, TAF6, TAF7, TAF9 and TEX10. Interacts with CHD7. Interacts with FAM124B. Interacts with p53/TP53 and histone H1. Interacts with CTCF. Interacts with TLK2. Interacts with HNRNPL in an RNA-dependent manner. Sumoylated.

The protein localises to the nucleus. The catalysed reaction is ATP + H2O = ADP + phosphate + H(+). Functionally, ATP-dependent chromatin-remodeling factor, it slides nucleosomes along DNA; nucleosome sliding requires ATP. Acts as a transcription repressor by remodeling chromatin structure and recruiting histone H1 to target genes. Suppresses p53/TP53-mediated apoptosis by recruiting histone H1 and preventing p53/TP53 transactivation activity. Acts as a negative regulator of Wnt signaling pathway by regulating beta-catenin (CTNNB1) activity. Negatively regulates CTNNB1-targeted gene expression by being recruited specifically to the promoter regions of several CTNNB1 responsive genes. Involved in both enhancer blocking and epigenetic remodeling at chromatin boundary via its interaction with CTCF. Acts as a suppressor of STAT3 activity by suppressing the LIF-induced STAT3 transcriptional activity. Also acts as a transcription activator via its interaction with ZNF143 by participating in efficient U6 RNA polymerase III transcription. Regulates alternative splicing of a core group of genes involved in neuronal differentiation, cell cycle and DNA repair. Enables H3K36me3-coupled transcription elongation and co-transcriptional RNA processing likely via interaction with HNRNPL. The polypeptide is Chromodomain-helicase-DNA-binding protein 8 (Mus musculus (Mouse)).